The sequence spans 254 residues: Aspartate/glutamate leucyltransferase (254 aa).

It belongs to the R-transferase family. Bpt subfamily.

Its subcellular location is the cytoplasm. It carries out the reaction N-terminal L-glutamyl-[protein] + L-leucyl-tRNA(Leu) = N-terminal L-leucyl-L-glutamyl-[protein] + tRNA(Leu) + H(+). The enzyme catalyses N-terminal L-aspartyl-[protein] + L-leucyl-tRNA(Leu) = N-terminal L-leucyl-L-aspartyl-[protein] + tRNA(Leu) + H(+). In terms of biological role, functions in the N-end rule pathway of protein degradation where it conjugates Leu from its aminoacyl-tRNA to the N-termini of proteins containing an N-terminal aspartate or glutamate. This is Aspartate/glutamate leucyltransferase from Xylella fastidiosa (strain 9a5c).